The primary structure comprises 344 residues: KRR1 small subunit processome component homolog (344 aa).

The KH domain maps to 126–194; sequence DIIKIGNLVH…VRDIVLDTMN (69 aa). A compositionally biased stretch (basic residues) spans 230-246; it reads KNKNISKRKQPKNKKPK. The segment at 230 to 326 is disordered; it reads KNKNISKRKQ…KRAAEDNKVD (97 aa). Residues 271–344 are a coiled coil; the sequence is FLNKEQKQAK…MKANKKKERS (74 aa). The span at 272 to 303 shows a compositional bias: basic and acidic residues; sequence LNKEQKQAKRQQERTAKQAEAAKKQDERRNKD.

It belongs to the KRR1 family. In terms of assembly, monomer. Component of the ribosomal small subunit (SSU) processome.

The protein localises to the nucleus. It is found in the nucleolus. In terms of biological role, required for 40S ribosome biogenesis. Involved in nucleolar processing of pre-18S ribosomal RNA and ribosome assembly. Binds to RNA. Required for female germline development, cell viability during eye development and for survival of dividing cells and epithelial cells during early wing disk development. This chain is KRR1 small subunit processome component homolog, found in Drosophila mojavensis (Fruit fly).